A 96-amino-acid chain; its full sequence is ATP synthase subunit c (96 aa).

2 consecutive transmembrane segments (helical) span residues 24–44 and 75–95; these read HVGA…VGVG and AIAE…IFVA.

It belongs to the ATPase C chain family. F-type ATPases have 2 components, F(1) - the catalytic core - and F(0) - the membrane proton channel. F(1) has five subunits: alpha(3), beta(3), gamma(1), delta(1), epsilon(1). F(0) has three main subunits: a(1), b(2) and c(10-14). The alpha and beta chains form an alternating ring which encloses part of the gamma chain. F(1) is attached to F(0) by a central stalk formed by the gamma and epsilon chains, while a peripheral stalk is formed by the delta and b chains.

Its subcellular location is the cell membrane. F(1)F(0) ATP synthase produces ATP from ADP in the presence of a proton or sodium gradient. F-type ATPases consist of two structural domains, F(1) containing the extramembraneous catalytic core and F(0) containing the membrane proton channel, linked together by a central stalk and a peripheral stalk. During catalysis, ATP synthesis in the catalytic domain of F(1) is coupled via a rotary mechanism of the central stalk subunits to proton translocation. In terms of biological role, key component of the F(0) channel; it plays a direct role in translocation across the membrane. A homomeric c-ring of between 10-14 subunits forms the central stalk rotor element with the F(1) delta and epsilon subunits. The sequence is that of ATP synthase subunit c from Mycoplasmoides gallisepticum (strain R(low / passage 15 / clone 2)) (Mycoplasma gallisepticum).